The primary structure comprises 205 residues: Small ribosomal subunit protein uS4 (205 aa).

Residues 93-171 (SRVSSVLYRS…SPHYLEVDRE (79 aa)) form the S4 RNA-binding domain.

It belongs to the universal ribosomal protein uS4 family. As to quaternary structure, part of the 30S ribosomal subunit. Contacts protein S5. The interaction surface between S4 and S5 is involved in control of translational fidelity.

Functionally, one of the primary rRNA binding proteins, it binds directly to 16S rRNA where it nucleates assembly of the body of the 30S subunit. Its function is as follows. With S5 and S12 plays an important role in translational accuracy. The protein is Small ribosomal subunit protein uS4 of Neorickettsia sennetsu (strain ATCC VR-367 / Miyayama) (Ehrlichia sennetsu).